A 354-amino-acid chain; its full sequence is Uroporphyrinogen decarboxylase (354 aa).

Residues 27–31, Asp77, Tyr154, Ser209, and His327 each bind substrate; that span reads RQAGR.

The protein belongs to the uroporphyrinogen decarboxylase family. Homodimer.

The protein resides in the cytoplasm. It carries out the reaction uroporphyrinogen III + 4 H(+) = coproporphyrinogen III + 4 CO2. Its pathway is porphyrin-containing compound metabolism; protoporphyrin-IX biosynthesis; coproporphyrinogen-III from 5-aminolevulinate: step 4/4. Its function is as follows. Catalyzes the decarboxylation of four acetate groups of uroporphyrinogen-III to yield coproporphyrinogen-III. This is Uroporphyrinogen decarboxylase from Shewanella halifaxensis (strain HAW-EB4).